The primary structure comprises 369 residues: 3-isopropylmalate dehydrogenase (369 aa).

Substrate-binding residues include arginine 98, arginine 108, arginine 136, and aspartate 227. Mg(2+)-binding residues include aspartate 227, aspartate 251, and aspartate 255. An NAD(+)-binding site is contributed by glycine 290–asparagine 302.

Belongs to the isocitrate and isopropylmalate dehydrogenases family. LeuB type 1 subfamily. As to quaternary structure, homodimer. It depends on Mg(2+) as a cofactor. Requires Mn(2+) as cofactor.

It is found in the cytoplasm. The enzyme catalyses (2R,3S)-3-isopropylmalate + NAD(+) = 4-methyl-2-oxopentanoate + CO2 + NADH. Its pathway is amino-acid biosynthesis; L-leucine biosynthesis; L-leucine from 3-methyl-2-oxobutanoate: step 3/4. Its function is as follows. Catalyzes the oxidation of 3-carboxy-2-hydroxy-4-methylpentanoate (3-isopropylmalate) to 3-carboxy-4-methyl-2-oxopentanoate. The product decarboxylates to 4-methyl-2 oxopentanoate. The sequence is that of 3-isopropylmalate dehydrogenase from Gluconobacter oxydans (strain 621H) (Gluconobacter suboxydans).